The following is a 241-amino-acid chain: Leucyl/phenylalanyl-tRNA--protein transferase (241 aa).

It belongs to the L/F-transferase family.

The protein resides in the cytoplasm. The catalysed reaction is N-terminal L-lysyl-[protein] + L-leucyl-tRNA(Leu) = N-terminal L-leucyl-L-lysyl-[protein] + tRNA(Leu) + H(+). It catalyses the reaction N-terminal L-arginyl-[protein] + L-leucyl-tRNA(Leu) = N-terminal L-leucyl-L-arginyl-[protein] + tRNA(Leu) + H(+). It carries out the reaction L-phenylalanyl-tRNA(Phe) + an N-terminal L-alpha-aminoacyl-[protein] = an N-terminal L-phenylalanyl-L-alpha-aminoacyl-[protein] + tRNA(Phe). Functionally, functions in the N-end rule pathway of protein degradation where it conjugates Leu, Phe and, less efficiently, Met from aminoacyl-tRNAs to the N-termini of proteins containing an N-terminal arginine or lysine. This Neisseria meningitidis serogroup C / serotype 2a (strain ATCC 700532 / DSM 15464 / FAM18) protein is Leucyl/phenylalanyl-tRNA--protein transferase.